Here is a 547-residue protein sequence, read N- to C-terminus: Sesquiterpene synthase TPS3 (547 aa).

5 residues coordinate (2E,6E)-farnesyl diphosphate: Arg-265, Asp-302, Asp-306, Arg-443, and Asp-446. Positions 302 and 306 each coordinate Mg(2+). A DDXXD motif motif is present at residues Asp-302–Asp-306. 3 residues coordinate Mg(2+): Asp-446, Thr-450, and Glu-454.

The protein belongs to the terpene synthase family. Tpsb subfamily. As to quaternary structure, monomer. Requires Mg(2+) as cofactor.

It localises to the cytoplasm. The catalysed reaction is (2E,6E)-farnesyl diphosphate = (1S,5S,6R)-alpha-bergamotene + diphosphate. Its pathway is secondary metabolite biosynthesis; terpenoid biosynthesis. Its function is as follows. Sesquiterpene synthase involved in the biosynthesis of volatile organic compounds. Mediates the conversion of (2E,6E)-farnesyl diphosphate (FPP) into alpha-bergamotene. Does not use (2E)-geranyl diphosphate (GPP) as substrate. In Cananga odorata (Ylang-ylang tree), this protein is Sesquiterpene synthase TPS3.